Here is a 202-residue protein sequence, read N- to C-terminus: Nucleoside triphosphate pyrophosphatase (202 aa).

Asp79 acts as the Proton acceptor in catalysis.

Belongs to the Maf family. Requires a divalent metal cation as cofactor.

The protein localises to the cytoplasm. It catalyses the reaction a ribonucleoside 5'-triphosphate + H2O = a ribonucleoside 5'-phosphate + diphosphate + H(+). It carries out the reaction a 2'-deoxyribonucleoside 5'-triphosphate + H2O = a 2'-deoxyribonucleoside 5'-phosphate + diphosphate + H(+). Its function is as follows. Nucleoside triphosphate pyrophosphatase. May have a dual role in cell division arrest and in preventing the incorporation of modified nucleotides into cellular nucleic acids. This Rhodopseudomonas palustris (strain HaA2) protein is Nucleoside triphosphate pyrophosphatase.